The following is a 296-amino-acid chain: tRNA uridine(34) hydroxylase (296 aa).

One can recognise a Rhodanese domain in the interval 130–225 (RGEDVVFFDG…YGEAYGDRGL (96 aa)). C185 acts as the Cysteine persulfide intermediate in catalysis.

It belongs to the TrhO family.

It carries out the reaction uridine(34) in tRNA + AH2 + O2 = 5-hydroxyuridine(34) in tRNA + A + H2O. In terms of biological role, catalyzes oxygen-dependent 5-hydroxyuridine (ho5U) modification at position 34 in tRNAs. In Kocuria rhizophila (strain ATCC 9341 / DSM 348 / NBRC 103217 / DC2201), this protein is tRNA uridine(34) hydroxylase.